The primary structure comprises 88 residues: MSILSALTSISNPMKSSKSSVANGGGRLSMGSNSVACGSCGGGSSSSGTINNADGSKTTYYTYTSPIYTYNYSYSYSSSGSSSSCGCH.

A compositionally biased stretch (polar residues) spans 1 to 14; sequence MSILSALTSISNPM. Residues 1 to 26 form a disordered region; the sequence is MSILSALTSISNPMKSSKSSVANGGG.

Belongs to the hssA/B family.

This chain is HssA/B-like protein 9 (hssl9), found in Dictyostelium discoideum (Social amoeba).